We begin with the raw amino-acid sequence, 131 residues long: D-ribose pyranase (131 aa).

Catalysis depends on histidine 20, which acts as the Proton donor. Residues aspartate 28, histidine 98, and 120–122 (YSN) contribute to the substrate site.

This sequence belongs to the RbsD / FucU family. RbsD subfamily. In terms of assembly, homodecamer.

It localises to the cytoplasm. The enzyme catalyses beta-D-ribopyranose = beta-D-ribofuranose. Its pathway is carbohydrate metabolism; D-ribose degradation; D-ribose 5-phosphate from beta-D-ribopyranose: step 1/2. Functionally, catalyzes the interconversion of beta-pyran and beta-furan forms of D-ribose. This chain is D-ribose pyranase, found in Lactobacillus gasseri (strain ATCC 33323 / DSM 20243 / BCRC 14619 / CIP 102991 / JCM 1131 / KCTC 3163 / NCIMB 11718 / NCTC 13722 / AM63).